We begin with the raw amino-acid sequence, 323 residues long: Phosphoribosylformylglycinamidine cyclo-ligase (323 aa).

It belongs to the AIR synthase family.

It is found in the cytoplasm. It catalyses the reaction 2-formamido-N(1)-(5-O-phospho-beta-D-ribosyl)acetamidine + ATP = 5-amino-1-(5-phospho-beta-D-ribosyl)imidazole + ADP + phosphate + H(+). The protein operates within purine metabolism; IMP biosynthesis via de novo pathway; 5-amino-1-(5-phospho-D-ribosyl)imidazole from N(2)-formyl-N(1)-(5-phospho-D-ribosyl)glycinamide: step 2/2. In Saccharolobus solfataricus (strain ATCC 35092 / DSM 1617 / JCM 11322 / P2) (Sulfolobus solfataricus), this protein is Phosphoribosylformylglycinamidine cyclo-ligase.